The primary structure comprises 271 residues: GATA transcription factor 19 (271 aa).

The segment at 1–23 (MAAEPPADGRDPPADDGAAGDGA) is disordered. The Tify domain maps to 33-68 (LSAASEQLTLVYQGEVYVFDPVPPQKVQAVLLVLGG). The CCT domain occupies 95–137 (RIASLMRFREKRKERCFDKKIRYSVRKEVAQKMKRRKGQFAGR). A GATA-type zinc finger spans residues 166–193 (CQNCGISSRLTPAMRRGPAGPRSLCNAC). The interval 238–271 (NQTTMKTDTEMVPEQEQKADVLPPTKEEDSMATS) is disordered. Basic and acidic residues predominate over residues 252 to 271 (QEQKADVLPPTKEEDSMATS).

It belongs to the type IV zinc-finger family. Class C subfamily.

It localises to the nucleus. In terms of biological role, transcriptional activator that specifically binds 5'-GATA-3' or 5'-GAT-3' motifs within gene promoters. This is GATA transcription factor 19 from Oryza sativa subsp. indica (Rice).